Reading from the N-terminus, the 1068-residue chain is tRNA wybutosine-synthesizing protein 4 (1068 aa).

Residues 1–31 (MCPPEQPAKAMAPSKSNQAAKSAVPTKEEKS) form a disordered region. S-adenosyl-L-methionine-binding positions include arginine 81, glycine 107, aspartate 134, 181-182 (DL), and glutamate 208. One can recognise a JmjC domain in the interval 876–1024 (ADFPSLSSDF…ALGRDVYGNR (149 aa)).

The protein belongs to the methyltransferase superfamily. LCMT family.

It carries out the reaction 7-[(3S)-3-amino-3-carboxypropyl]wyosine(37) in tRNA(Phe) + S-adenosyl-L-methionine = 7-[(3S)-(3-amino-3-methoxycarbonyl)propyl]wyosine(37) in tRNA(Phe) + S-adenosyl-L-homocysteine. It catalyses the reaction 7-[(3S)-(3-amino-3-methoxycarbonyl)propyl]wyosine(37) in tRNA(Phe) + S-adenosyl-L-methionine + CO2 = wybutosine(37) in tRNA(Phe) + S-adenosyl-L-homocysteine + 2 H(+). Its pathway is tRNA modification; wybutosine-tRNA(Phe) biosynthesis. Functionally, probable S-adenosyl-L-methionine-dependent methyltransferase that acts as a component of the wybutosine biosynthesis pathway. Wybutosine is a hyper modified guanosine with a tricyclic base found at the 3'-position adjacent to the anticodon of eukaryotic phenylalanine tRNA. May methylate the carboxyl group of leucine residues to form alpha-leucine ester residues. In Emericella nidulans (strain FGSC A4 / ATCC 38163 / CBS 112.46 / NRRL 194 / M139) (Aspergillus nidulans), this protein is tRNA wybutosine-synthesizing protein 4 (ppm2).